The following is a 399-amino-acid chain: Acetate kinase (399 aa).

Position 7 (asparagine 7) interacts with Mg(2+). An ATP-binding site is contributed by lysine 14. Arginine 91 is a binding site for substrate. The Proton donor/acceptor role is filled by aspartate 148. Residues 208 to 212, 283 to 285, and 331 to 335 each bind ATP; these read HIGNG, DMR, and GVGEN. Mg(2+) is bound at residue glutamate 385.

This sequence belongs to the acetokinase family. Homodimer. The cofactor is Mg(2+). Mn(2+) serves as cofactor.

It is found in the cytoplasm. The catalysed reaction is acetate + ATP = acetyl phosphate + ADP. The protein operates within metabolic intermediate biosynthesis; acetyl-CoA biosynthesis; acetyl-CoA from acetate: step 1/2. Its function is as follows. Catalyzes the formation of acetyl phosphate from acetate and ATP. Can also catalyze the reverse reaction. The sequence is that of Acetate kinase from Bacteroides thetaiotaomicron (strain ATCC 29148 / DSM 2079 / JCM 5827 / CCUG 10774 / NCTC 10582 / VPI-5482 / E50).